Consider the following 579-residue polypeptide: F-box protein At5g39450 (579 aa).

In terms of domain architecture, F-box spans T16–Q62.

The sequence is that of F-box protein At5g39450 from Arabidopsis thaliana (Mouse-ear cress).